The primary structure comprises 146 residues: Snaclec agkisacutacin subunit B (146 aa).

An N-terminal signal peptide occupies residues 1–23 (MGRFIFVSFGLLVVFLSLSGTAA). The C-type lectin domain maps to 24-146 (DCPSDWSSYE…TCSFVCKFQA (123 aa)). 3 disulfides stabilise this stretch: Cys-25/Cys-36, Cys-53/Cys-142, and Cys-119/Cys-134. Ca(2+)-binding residues include Ser-64 and Glu-70.

It belongs to the snaclec family. As to quaternary structure, heterodimer of subunits A and B; disulfide-linked. As to expression, expressed by the venom gland.

It is found in the secreted. In terms of biological role, anticoagulant protein which binds to the gamma-carboxyglutamic acid-domain regions of factor IX (F9) and factor X (F10) in the presence of calcium with a 1 to 1 stoichiometry. Also inhibits platelet aggregation by binding to platelet glycoprotein Ibalpha (GP1BA) and functioning as a blocker of von Willebrand factor (VWF). Is devoid of hemorrhagic and lethal activities. Possesses antithrombotic and thrombolytic activities. Also hydrolyzes the Aalpha-chain of fibrinogen (FGA). Does not affect the Bbeta-chain (FGB) and the gamma chain (FGG). This Deinagkistrodon acutus (Hundred-pace snake) protein is Snaclec agkisacutacin subunit B.